A 282-amino-acid polypeptide reads, in one-letter code: Aminoglycoside 6-adenylyltransferase (282 aa).

The enzyme catalyses streptomycin + ATP = 6-O-adenylylstreptomycin + diphosphate. Functionally, required for streptomycin resistance. Adenylates streptomycin on the O-6 residue. The chain is Aminoglycoside 6-adenylyltransferase from Staphylococcus aureus.